Consider the following 403-residue polypeptide: S-adenosylmethionine synthase (403 aa).

His15 lines the ATP pocket. Residue Asp17 participates in Mg(2+) binding. Glu43 provides a ligand contact to K(+). Glu56 and Gln99 together coordinate L-methionine. The interval 99 to 109 (QSPDINQGVDR) is flexible loop. ATP-binding positions include 166–168 (DAK), 232–233 (KF), Asp241, 247–248 (RK), Ala264, and Lys268. Asp241 contacts L-methionine. Lys272 contacts L-methionine.

The protein belongs to the AdoMet synthase family. In terms of assembly, homotetramer; dimer of dimers. Mg(2+) is required as a cofactor. It depends on K(+) as a cofactor.

Its subcellular location is the cytoplasm. The catalysed reaction is L-methionine + ATP + H2O = S-adenosyl-L-methionine + phosphate + diphosphate. It participates in amino-acid biosynthesis; S-adenosyl-L-methionine biosynthesis; S-adenosyl-L-methionine from L-methionine: step 1/1. Its function is as follows. Catalyzes the formation of S-adenosylmethionine (AdoMet) from methionine and ATP. The overall synthetic reaction is composed of two sequential steps, AdoMet formation and the subsequent tripolyphosphate hydrolysis which occurs prior to release of AdoMet from the enzyme. This chain is S-adenosylmethionine synthase, found in Xylella fastidiosa (strain M12).